A 277-amino-acid chain; its full sequence is NAD kinase (277 aa).

The Proton acceptor role is filled by Asp55. Residues 55–56 (DG), 131–132 (NE), Arg157, Asp159, and 170–175 (TAYNKS) each bind NAD(+).

Belongs to the NAD kinase family. Requires a divalent metal cation as cofactor.

The protein resides in the cytoplasm. The catalysed reaction is NAD(+) + ATP = ADP + NADP(+) + H(+). In terms of biological role, involved in the regulation of the intracellular balance of NAD and NADP, and is a key enzyme in the biosynthesis of NADP. Catalyzes specifically the phosphorylation on 2'-hydroxyl of the adenosine moiety of NAD to yield NADP. The chain is NAD kinase from Streptococcus mutans serotype c (strain ATCC 700610 / UA159).